Here is a 135-residue protein sequence, read N- to C-terminus: Methylglyoxal synthase (135 aa).

The MGS-like domain occupies 1-135 (MPKRRRIALI…AQPDPKEIHA (135 aa)). Substrate is bound by residues histidine 12, lysine 16, 38–41 (TGTT), and 58–59 (SG). Aspartate 64 (proton donor/acceptor) is an active-site residue. Residue histidine 91 participates in substrate binding.

It belongs to the methylglyoxal synthase family.

The enzyme catalyses dihydroxyacetone phosphate = methylglyoxal + phosphate. Catalyzes the formation of methylglyoxal from dihydroxyacetone phosphate. The polypeptide is Methylglyoxal synthase (Ralstonia nicotianae (strain ATCC BAA-1114 / GMI1000) (Ralstonia solanacearum)).